Consider the following 1551-residue polypeptide: Pentafunctional AROM polypeptide 1 (1551 aa).

Positions 1 to 379 are 3-dehydroquinate synthase; it reads MSIEKVSILG…YESKAHQIFK (379 aa). Residues 42-44, 80-83, 111-113, and Asp116 contribute to the NAD(+) site; these read DTN, ENHK, and GGV. A 7-phospho-2-dehydro-3-deoxy-D-arabino-heptonate-binding site is contributed by Arg127. Position 136-137 (136-137) interacts with NAD(+); the sequence is TT. Residues Asp143 and Lys149 each contribute to the 7-phospho-2-dehydro-3-deoxy-D-arabino-heptonate site. NAD(+) is bound at residue Lys158. Asn159 lines the 7-phospho-2-dehydro-3-deoxy-D-arabino-heptonate pocket. Residues 176 to 179 and Asn187 contribute to the NAD(+) site; that span reads FLQT. Position 191 (Glu191) interacts with Zn(2+). Residues 191–194 and Lys243 contribute to the 7-phospho-2-dehydro-3-deoxy-D-arabino-heptonate site; that span reads EVVK. Catalysis depends on Glu253, which acts as the Proton acceptor; for 3-dehydroquinate synthase activity. Residues 257 to 261 and His264 each bind 7-phospho-2-dehydro-3-deoxy-D-arabino-heptonate; that span reads RNLLN. Zn(2+) is bound at residue His264. Catalysis depends on His268, which acts as the Proton acceptor; for 3-dehydroquinate synthase activity. The 7-phospho-2-dehydro-3-deoxy-D-arabino-heptonate site is built by His280 and Lys351. A Zn(2+)-binding site is contributed by His280. The EPSP synthase stretch occupies residues 392-835; the sequence is VHPFANRHPE…WDVLHSKFNA (444 aa). Residues 854 to 1044 form a shikimate kinase region; that stretch reads DRSIVIIGMR…LPATRSTFVT (191 aa). 861 to 868 is an ATP binding site; that stretch reads GMRAAGKT. The 3-dehydroquinase stretch occupies residues 1045–1258; sequence LTYPDLRKVP…IGVGQLSLKE (214 aa). His1162 acts as the Proton acceptor; for 3-dehydroquinate dehydratase activity in catalysis. Lys1191 acts as the Schiff-base intermediate with substrate; for 3-dehydroquinate dehydratase activity in catalysis. The shikimate dehydrogenase stretch occupies residues 1271–1551; the sequence is EKEFWVVGSP…KVIHSAVLNE (281 aa).

In the N-terminal section; belongs to the sugar phosphate cyclases superfamily. Dehydroquinate synthase family. It in the 2nd section; belongs to the EPSP synthase family. This sequence in the 3rd section; belongs to the shikimate kinase family. The protein in the 4th section; belongs to the type-I 3-dehydroquinase family. In the C-terminal section; belongs to the shikimate dehydrogenase family. In terms of assembly, homodimer. The cofactor is Zn(2+).

It is found in the cytoplasm. It catalyses the reaction 7-phospho-2-dehydro-3-deoxy-D-arabino-heptonate = 3-dehydroquinate + phosphate. It carries out the reaction 3-dehydroquinate = 3-dehydroshikimate + H2O. The enzyme catalyses shikimate + NADP(+) = 3-dehydroshikimate + NADPH + H(+). The catalysed reaction is shikimate + ATP = 3-phosphoshikimate + ADP + H(+). It catalyses the reaction 3-phosphoshikimate + phosphoenolpyruvate = 5-O-(1-carboxyvinyl)-3-phosphoshikimate + phosphate. Its pathway is metabolic intermediate biosynthesis; chorismate biosynthesis; chorismate from D-erythrose 4-phosphate and phosphoenolpyruvate: step 2/7. It functions in the pathway metabolic intermediate biosynthesis; chorismate biosynthesis; chorismate from D-erythrose 4-phosphate and phosphoenolpyruvate: step 3/7. The protein operates within metabolic intermediate biosynthesis; chorismate biosynthesis; chorismate from D-erythrose 4-phosphate and phosphoenolpyruvate: step 4/7. It participates in metabolic intermediate biosynthesis; chorismate biosynthesis; chorismate from D-erythrose 4-phosphate and phosphoenolpyruvate: step 5/7. Its pathway is metabolic intermediate biosynthesis; chorismate biosynthesis; chorismate from D-erythrose 4-phosphate and phosphoenolpyruvate: step 6/7. In terms of biological role, the AROM polypeptide catalyzes 5 consecutive enzymatic reactions in prechorismate polyaromatic amino acid biosynthesis. This chain is Pentafunctional AROM polypeptide 1, found in Lodderomyces elongisporus (strain ATCC 11503 / CBS 2605 / JCM 1781 / NBRC 1676 / NRRL YB-4239) (Yeast).